The primary structure comprises 375 residues: Histidine biosynthesis bifunctional protein HisB (375 aa).

The segment at 1–168 (MTPILFVDRD…GIAHELADAP (168 aa)) is histidinol-phosphatase. The Nucleophile role is filled by Asp-8. Asp-8, Asp-10, and Asp-128 together coordinate Mg(2+). Asp-10 serves as the catalytic Proton donor. An imidazoleglycerol-phosphate dehydratase region spans residues 169–375 (RRAVVQRNTK…TALPSTKGAL (207 aa)).

It in the N-terminal section; belongs to the histidinol-phosphatase family. The protein in the C-terminal section; belongs to the imidazoleglycerol-phosphate dehydratase family. Mg(2+) serves as cofactor.

Its subcellular location is the cytoplasm. The catalysed reaction is D-erythro-1-(imidazol-4-yl)glycerol 3-phosphate = 3-(imidazol-4-yl)-2-oxopropyl phosphate + H2O. It catalyses the reaction L-histidinol phosphate + H2O = L-histidinol + phosphate. The protein operates within amino-acid biosynthesis; L-histidine biosynthesis; L-histidine from 5-phospho-alpha-D-ribose 1-diphosphate: step 6/9. Its pathway is amino-acid biosynthesis; L-histidine biosynthesis; L-histidine from 5-phospho-alpha-D-ribose 1-diphosphate: step 8/9. The protein is Histidine biosynthesis bifunctional protein HisB of Xanthomonas campestris pv. campestris (strain B100).